The primary structure comprises 401 residues: Tyrosine--tRNA ligase (401 aa).

Positions 42–51 match the 'HIGH' region motif; sequence PTAPDLHLGH. The short motif at 226–230 is the 'KMSKS' region element; the sequence is KMSKS. Lys-229 serves as a coordination point for ATP. The S4 RNA-binding domain maps to 336-397; the sequence is IALAQLLKQI…GKRRIAKLSI (62 aa).

Belongs to the class-I aminoacyl-tRNA synthetase family. TyrS type 2 subfamily. In terms of assembly, homodimer.

Its subcellular location is the cytoplasm. The catalysed reaction is tRNA(Tyr) + L-tyrosine + ATP = L-tyrosyl-tRNA(Tyr) + AMP + diphosphate + H(+). Catalyzes the attachment of tyrosine to tRNA(Tyr) in a two-step reaction: tyrosine is first activated by ATP to form Tyr-AMP and then transferred to the acceptor end of tRNA(Tyr). In Legionella pneumophila subsp. pneumophila (strain Philadelphia 1 / ATCC 33152 / DSM 7513), this protein is Tyrosine--tRNA ligase.